The sequence spans 339 residues: Anthranilate phosphoribosyltransferase (339 aa).

Residues Gly78, Gly81 to Asp82, Thr86, Asn88 to Thr91, Lys106 to Ser114, and Ser118 each bind 5-phospho-alpha-D-ribose 1-diphosphate. Gly78 contacts anthranilate. Ser90 provides a ligand contact to Mg(2+). Asn109 contributes to the anthranilate binding site. Arg164 is a binding site for anthranilate. Residues Asp225 and Glu226 each contribute to the Mg(2+) site. The segment covering Thr248 to Ala265 has biased composition (basic and acidic residues). The interval Thr248–Thr271 is disordered.

This sequence belongs to the anthranilate phosphoribosyltransferase family. As to quaternary structure, homodimer. Mg(2+) is required as a cofactor.

The enzyme catalyses N-(5-phospho-beta-D-ribosyl)anthranilate + diphosphate = 5-phospho-alpha-D-ribose 1-diphosphate + anthranilate. The protein operates within amino-acid biosynthesis; L-tryptophan biosynthesis; L-tryptophan from chorismate: step 2/5. Functionally, catalyzes the transfer of the phosphoribosyl group of 5-phosphorylribose-1-pyrophosphate (PRPP) to anthranilate to yield N-(5'-phosphoribosyl)-anthranilate (PRA). This Methanopyrus kandleri (strain AV19 / DSM 6324 / JCM 9639 / NBRC 100938) protein is Anthranilate phosphoribosyltransferase.